A 322-amino-acid chain; its full sequence is Homeobox protein DBX1-B (322 aa).

Residues glycine 179 to lysine 238 constitute a DNA-binding region (homeobox). 2 disordered regions span residues lysine 238–valine 266 and aspartate 296–serine 322. A compositionally biased stretch (acidic residues) spans serine 312–serine 322.

It belongs to the H2.0 homeobox family.

It localises to the nucleus. This is Homeobox protein DBX1-B (dbx1b) from Danio rerio (Zebrafish).